We begin with the raw amino-acid sequence, 210 residues long: 2-Cys peroxiredoxin BAS1, chloroplastic (210 aa).

The transit peptide at 1 to 10 (DARARSFVAR) directs the protein to the chloroplast. The 160-residue stretch at 18–177 (PLVGNKAPDF…TLRTLQALQY (160 aa)) folds into the Thioredoxin domain. Cys64 (cysteine sulfenic acid (-SOH) intermediate) is an active-site residue.

This sequence belongs to the peroxiredoxin family. AhpC/Prx1 subfamily. Homodimer; disulfide-linked, upon oxidation. As to expression, expressed in leaf blade, sheath, basiplast, stem and green spike. Maximal expression in young developing shoots segments where cell division and elongation take place. Not expressed in roots.

The protein localises to the plastid. It is found in the chloroplast. The enzyme catalyses a hydroperoxide + [thioredoxin]-dithiol = an alcohol + [thioredoxin]-disulfide + H2O. Functionally, thiol-specific peroxidase that catalyzes the reduction of hydrogen peroxide and organic hydroperoxides to water and alcohols, respectively. Plays a role in cell protection against oxidative stress by detoxifying peroxides. May be an antioxidant enzyme particularly in the developing shoot and photosynthesizing leaf. This Hordeum vulgare (Barley) protein is 2-Cys peroxiredoxin BAS1, chloroplastic (BAS1).